The primary structure comprises 219 residues: Large ribosomal subunit protein uL3 (219 aa).

The interval 133–153 (GRASHGNSRSHNVPGSIGMAQ) is disordered. The residue at position 153 (glutamine 153) is an N5-methylglutamine.

This sequence belongs to the universal ribosomal protein uL3 family. Part of the 50S ribosomal subunit. Forms a cluster with proteins L14 and L19. Methylated by PrmB.

In terms of biological role, one of the primary rRNA binding proteins, it binds directly near the 3'-end of the 23S rRNA, where it nucleates assembly of the 50S subunit. This chain is Large ribosomal subunit protein uL3, found in Burkholderia mallei (strain NCTC 10247).